The following is a 497-amino-acid chain: Acetyl-coenzyme A carboxylase carboxyl transferase subunit beta, chloroplastic (497 aa).

Residues leucine 230–lysine 497 enclose the CoA carboxyltransferase N-terminal domain. Positions 234, 237, 253, and 256 each coordinate Zn(2+). The C4-type zinc-finger motif lies at cysteine 234–cysteine 256.

Belongs to the AccD/PCCB family. In terms of assembly, acetyl-CoA carboxylase is a heterohexamer composed of biotin carboxyl carrier protein, biotin carboxylase and 2 subunits each of ACCase subunit alpha and ACCase plastid-coded subunit beta (accD). Zn(2+) serves as cofactor.

Its subcellular location is the plastid. The protein resides in the chloroplast stroma. The catalysed reaction is N(6)-carboxybiotinyl-L-lysyl-[protein] + acetyl-CoA = N(6)-biotinyl-L-lysyl-[protein] + malonyl-CoA. It participates in lipid metabolism; malonyl-CoA biosynthesis; malonyl-CoA from acetyl-CoA: step 1/1. Functionally, component of the acetyl coenzyme A carboxylase (ACC) complex. Biotin carboxylase (BC) catalyzes the carboxylation of biotin on its carrier protein (BCCP) and then the CO(2) group is transferred by the transcarboxylase to acetyl-CoA to form malonyl-CoA. The chain is Acetyl-coenzyme A carboxylase carboxyl transferase subunit beta, chloroplastic from Nandina domestica (Heavenly bamboo).